The chain runs to 270 residues: Formamidopyrimidine-DNA glycosylase (270 aa).

Pro2 functions as the Schiff-base intermediate with DNA in the catalytic mechanism. Glu3 acts as the Proton donor in catalysis. Lys58 serves as the catalytic Proton donor; for beta-elimination activity. DNA contacts are provided by His91, Arg110, and Lys151. Residues 236–270 (FVYGRGGQPCKVCGTTLREIKLGQRASVYCPKCQR) form an FPG-type zinc finger. Arg260 serves as the catalytic Proton donor; for delta-elimination activity.

Belongs to the FPG family. In terms of assembly, monomer. Zn(2+) serves as cofactor.

The catalysed reaction is Hydrolysis of DNA containing ring-opened 7-methylguanine residues, releasing 2,6-diamino-4-hydroxy-5-(N-methyl)formamidopyrimidine.. It carries out the reaction 2'-deoxyribonucleotide-(2'-deoxyribose 5'-phosphate)-2'-deoxyribonucleotide-DNA = a 3'-end 2'-deoxyribonucleotide-(2,3-dehydro-2,3-deoxyribose 5'-phosphate)-DNA + a 5'-end 5'-phospho-2'-deoxyribonucleoside-DNA + H(+). Functionally, involved in base excision repair of DNA damaged by oxidation or by mutagenic agents. Acts as a DNA glycosylase that recognizes and removes damaged bases. Has a preference for oxidized purines, such as 7,8-dihydro-8-oxoguanine (8-oxoG). Has AP (apurinic/apyrimidinic) lyase activity and introduces nicks in the DNA strand. Cleaves the DNA backbone by beta-delta elimination to generate a single-strand break at the site of the removed base with both 3'- and 5'-phosphates. This chain is Formamidopyrimidine-DNA glycosylase, found in Pseudomonas savastanoi pv. phaseolicola (strain 1448A / Race 6) (Pseudomonas syringae pv. phaseolicola (strain 1448A / Race 6)).